An 86-amino-acid chain; its full sequence is Cell division topological specificity factor (86 aa).

It belongs to the MinE family.

Functionally, prevents the cell division inhibition by proteins MinC and MinD at internal division sites while permitting inhibition at polar sites. This ensures cell division at the proper site by restricting the formation of a division septum at the midpoint of the long axis of the cell. In Shewanella sediminis (strain HAW-EB3), this protein is Cell division topological specificity factor.